The sequence spans 563 residues: IQCJ-SCHIP1 readthrough transcript protein (563 aa).

Residues 47–67 form the IQ domain; the sequence is ESKVKIIQRAWREYLQRQEPL. 4 disordered regions span residues 63-150, 164-295, 312-336, and 384-430; these read RQEP…VSAL, VIDE…EPPV, FREQEVRNQGQARTNSTSAQKNERE, and SGSD…SLDD. Over residues 76 to 87 the composition is skewed to low complexity; that stretch reads SVSSEKLSSSVS. Residues 88–97 show a composition bias toward polar residues; it reads MNTFSDSSTP. The segment covering 108-143 has biased composition (low complexity); the sequence is SDAGSSSSSSRASSQSNSTKVTPCSECKSSSSPGGS. Residues 168 to 182 show a composition bias toward acidic residues; that stretch reads WAPEEDGEEEEEEDE. Basic and acidic residues-rich tracts occupy residues 183–199 and 229–238; these read RDQRGYRDDRSPAREPG and HQHDPQDLRH. Phosphoserine is present on Ser193. Residues 318-331 are compositionally biased toward polar residues; sequence RNQGQARTNSTSAQ. Basic and acidic residues predominate over residues 385–399; that stretch reads GSDKDSDADDSKTET. Residues 400–411 show a composition bias toward polar residues; sequence SLDTPLSPMSKQ. The segment at 419-563 is required for interaction with ankyrins; it reads DTTEEESESL…KHMAEKMPAK (145 aa). Residues 420-430 show a composition bias toward acidic residues; that stretch reads TTEEESESLDD. The stretch at 500 to 534 forms a coiled coil; the sequence is IGQLQVIVNDLHSQIESLNEELVQLLLIRDELHTE.

Homooligomer (via coiled coil domain). Interacts (via IQ domain) with calmodulin; the interaction is direct and lost in presence of calcium. Interacts with ANK3 (via ANK repeats); required for localization at axon initial segments (AIS) and nodes of Ranvier. Interacts with SPTBN4. Interacts with KCNQ2 and KCNQ3. In terms of tissue distribution, highly expressed in brain and to a lower extent in heart and kidney.

It is found in the cell projection. Its subcellular location is the axon. The protein localises to the cytoplasm. In terms of biological role, may play a role in action potential conduction in myelinated cells through the organization of molecular complexes at nodes of Ranvier and axon initial segments. May also play a role in axon outgrowth and guidance. The polypeptide is IQCJ-SCHIP1 readthrough transcript protein (Homo sapiens (Human)).